Consider the following 391-residue polypeptide: cAMP-dependent protein kinase regulatory subunit (391 aa).

The tract at residues 1 to 84 is disordered; it reads MFKSPFGANA…PPNPESYPAQ (84 aa). The segment at 1–131 is dimerization and phosphorylation; that stretch reads MFKSPFGANA…RLKTAIAGNF (131 aa). Residues 38–55 are compositionally biased toward polar residues; sequence TVTSPTSPNFGMNAQSMF. S92 bears the Phosphoserine mark. 3',5'-cyclic AMP-binding positions include 132-261, E210, R219, 264-381, E331, and R340; these read LFSH…FLRE and LLQT…DIKT.

Belongs to the cAMP-dependent kinase regulatory chain family. In terms of assembly, tetramer, composed of 2 regulatory (R) and 2 catalytic (C) subunits. In the presence of cAMP it dissociates into 2 active monomeric C subunits and an R dimer.

The chain is cAMP-dependent protein kinase regulatory subunit (PKAR) from Colletotrichum orbiculare (strain 104-T / ATCC 96160 / CBS 514.97 / LARS 414 / MAFF 240422) (Cucumber anthracnose fungus).